The following is a 177-amino-acid chain: Bifunctional protein PyrR (177 aa).

The short motif at 101–113 (IILIDDVLYTGRT) is the PRPP-binding element.

The protein belongs to the purine/pyrimidine phosphoribosyltransferase family. PyrR subfamily.

It catalyses the reaction UMP + diphosphate = 5-phospho-alpha-D-ribose 1-diphosphate + uracil. In terms of biological role, regulates the transcription of the pyrimidine nucleotide (pyr) operon in response to exogenous pyrimidines. Its function is as follows. Also displays a weak uracil phosphoribosyltransferase activity which is not physiologically significant. This is Bifunctional protein PyrR from Endomicrobium trichonymphae.